The sequence spans 378 residues: MNAPTTVADSVTVPVSLGDRSYDILIGKGLVERAGEEVAKRLKGVRVAIVTDENVAAVHLERLQASFARAGIDSTPVIVAPGEKSKSFATLETVTNAILAAKLERGDAVVALGGGVVGDLSGFVAGIVRRGMNFVQMPTSLLAQVDSSVGGKTGINTAHGKNLVGVFNQPQLVLADTQVLDTLSPREFRAGYAEVAKYGLIDRPDFFAWLEANWQEVFSGGAARTKAIAESCRSKAAVVARDERETGDRALLNLGHTFGHALESATGYDSSRLVHGEGVAIGMALAYRFSARMNLAGIEAAERVEAHLKAVGLPVSLAEVPGGLPPAEKLMDYIAQDKKVTRGTLTFILTHGIGQSFIAKDVPPAAVLEFLKERLAIA.

NAD(+)-binding positions include Gly115–Asp119, Thr139–Ser140, Lys152, and Lys161. Residues Glu194, His256, and His275 each contribute to the Zn(2+) site.

Belongs to the sugar phosphate cyclases superfamily. Dehydroquinate synthase family. Requires Co(2+) as cofactor. Zn(2+) is required as a cofactor. The cofactor is NAD(+).

The protein localises to the cytoplasm. It catalyses the reaction 7-phospho-2-dehydro-3-deoxy-D-arabino-heptonate = 3-dehydroquinate + phosphate. It functions in the pathway metabolic intermediate biosynthesis; chorismate biosynthesis; chorismate from D-erythrose 4-phosphate and phosphoenolpyruvate: step 2/7. In terms of biological role, catalyzes the conversion of 3-deoxy-D-arabino-heptulosonate 7-phosphate (DAHP) to dehydroquinate (DHQ). This Brucella canis (strain ATCC 23365 / NCTC 10854 / RM-666) protein is 3-dehydroquinate synthase.